Here is a 1312-residue protein sequence, read N- to C-terminus: MSRIEKMSILGVRSFGIEDKDKQIISFFSPLTILVGPNGAGKTTIIECLKYICTGDFPPGTKGNTFVHDPKVAQETDVRAQIRLQFRDVNGEMVAVHRSMLCSQKNKKTEFKTLEGVITRMKHGEKVSLSSKCAEIDREMISCLGVSKSVLNNVIFCHQEDSNWPLSEGKALKQKFDEIFSATRYIKALDTLRQVRQTQGQKVKECQTELKYLKQNKEKACEIRDQITSKEAQLASSQEIVRSYEDELEPLKNRLKEIEHNLSKIMKLDNEIKALESRKKQMEKDNSELEQKMEKVFQGTDEQLNDLYHNHQRTVREKERRLVDCQRELEKLNKEARLLNQEKAELLVEQGRLQLQADRHQEHIRARDSLIQSLATHLELDGFERGPFSERQIKNFHELVKERQEREAKTASQLLSDLTDKEALKQRQLDELRDRKSGLGRTIELKTEILTKKQSELRHVRSELQQLEGSSDRILELDQELTKAERELSKAEKNSSIETLKAEVMSLQNEKADLDRSLRKLDQEMEQLNHHTTTRTQMEMLTKDKTDKDEQIRKIKSRHSDELTSLLGYFPNKKQLEDWLHSKSKEINQTRDRLAKLNKELASAEQNKNHINNELKKKEEQLSSYEDKLFDVCGSQDLESDLGRLKEEIEKSSKQRAMLAGATAVYSQFITQLTDENQSCCPVCQRVFQTEAELQEVISDLQSKLRLAPDKLKSTESELKKKERRRDEMLGLVPVRQSIIDLKEKEIPELRNRLQSVNRDIQRLKNDIEEQETLLGTIMPEEESAKVCLTDVTIMERFQMELKDVERKIAQQAAKLQGVDLDRTVQQVNQEKQEKQHRLDTVTSKIELNRKLIQDQQEQIQHLKSKTNELKSEKLQIATNLQRRQQMEEQSVELSTEVQSLNREIKDAKEQISPLETALEKLQQEKEELIHRKHTSNKMAQDKINDIKEKVKNIHGYMKDIENYIQDGKDDYKKQKETELNGVAVQLNECEKHREKINKDMGTMRQDIDTQKIQERWLQDNLTLRKRRDELKEVEEEPKQHLKEMGQMQVLQMKNEHQKLEENIDTIKRNHSLALGRQKGYEDEILHFKKELREPQFRDAEEKYREMMIVMRTTELVNKDLDIYYKTLDQAIMKFHSMKMEEINKIIRDLWRSTYRGQDIEYIEIRSDADENVSASDKRRNYNYRVVMLKGDTALDMRGRCSAGQKVLASLIIRLALAETFCLNCGILALDEPTTNLDRENIESLAHALVEIIKSRSQQRNFQLLVITHDEDFVELLGRSEYVEKFYRVKKNMDQCSEIVKCSISSLGSYVH.

Residues R13, N38, G39, G41, K42, T43, T44, V67, D69, and Q159 each contribute to the ATP site. T43 is a Mg(2+) binding site. Q159 serves as a coordination point for Mg(2+). 2 coiled-coil regions span residues 200-532 (GQKV…NHHT) and 635-673 (SQDLESDLGRLKEEIEKSSKQRAMLAGATAVYSQFITQL). S635 carries the phosphoserine modification. The region spanning 635-734 (SQDLESDLGR…RRDEMLGLVP (100 aa)) is the Zinc-hook domain. 2 residues coordinate Zn(2+): C681 and C684. Residue T690 is modified to Phosphothreonine. Coiled-coil stretches lie at residues 706–734 (RLAPDKLKSTESELKKKERRRDEMLGLVP) and 776–942 (GTIM…MAQD). Residue K959 is modified to N6-acetyllysine. Positions 1043-1075 (KEMGQMQVLQMKNEHQKLEENIDTIKRNHSLAL) form a coiled coil.

It belongs to the SMC family. RAD50 subfamily. Component of the MRN complex composed of two heterodimers RAD50 and MRE11 associated with a single NBN. The MRN complexes dimerize on DNA to form joined MRN-MRN oligomers required for DNA double-strand break repair. As part of the MRN complex, interacts with MCM8 and MCM9; the interaction recruits the complex to DNA repair sites. Component of the BASC complex, at least composed of BRCA1, MSH2, MSH6, MLH1, ATM, BLM, RAD50, MRE11 and NBN. Found in a complex with TERF2. Interacts with RINT1. Interacts with BRCA1 via its N-terminal domain. Interacts with DCLRE1C/Artemis. Interacts with MRNIP. Interacts with CYREN (via XLF motif). Interacts with C1QBP and MRE11; interaction takes place in absence of DNA damage to form the MRC (MRE11-RAD50-C1QBP) complex that inhibits the activity of MRE11. The cofactor is Zn(2+). Phosphorylation at Ser-635 by ATM in response to DNA damage is required for double-strand break (DSB) repair. As to expression, in adult, it is expressed at very low level in most tissues, except in heart, lung and aorta. Expressed at high level in testis.

The protein localises to the nucleus. Its subcellular location is the chromosome. The protein resides in the telomere. The enzyme catalyses ATP + H2O = ADP + phosphate + H(+). Functionally, component of the MRN complex, which plays a central role in double-strand break (DSB) repair, DNA recombination, maintenance of telomere integrity and meiosis. The MRN complex is involved in the repair of DNA double-strand breaks (DSBs) via homologous recombination (HR), an error-free mechanism which primarily occurs during S and G2 phases. The complex (1) mediates the end resection of damaged DNA, which generates proper single-stranded DNA, a key initial steps in HR, and is (2) required for the recruitment of other repair factors and efficient activation of ATM and ATR upon DNA damage. The MRN complex possesses single-strand endonuclease activity and double-strand-specific 3'-5' exonuclease activity, which are provided by MRE11, to initiate end resection, which is required for single-strand invasion and recombination. Within the complex, RAD50 is both required to bind DNA ends and hold them in close proximity and regulate the activity of MRE11. RAD50 provides an ATP-dependent control of MRE11 by positioning DNA ends into the MRE11 active site: ATP-binding induces a large structural change from an open form with accessible MRE11 nuclease sites into a closed form. The MRN complex is also required for DNA damage signaling via activation of the ATM and ATR kinases: the nuclease activity of MRE11 is not required to activate ATM and ATR. The MRN complex is also required for the processing of R-loops. In telomeres the MRN complex may modulate t-loop formation. In Mus musculus (Mouse), this protein is DNA repair protein RAD50 (Rad50).